A 125-amino-acid polypeptide reads, in one-letter code: Small ribosomal subunit protein uS13 (125 aa).

The interval Gly-95–Lys-125 is disordered. Residues Thr-105 to Lys-125 show a composition bias toward basic residues.

It belongs to the universal ribosomal protein uS13 family. In terms of assembly, part of the 30S ribosomal subunit. Forms a loose heterodimer with protein S19. Forms two bridges to the 50S subunit in the 70S ribosome.

In terms of biological role, located at the top of the head of the 30S subunit, it contacts several helices of the 16S rRNA. In the 70S ribosome it contacts the 23S rRNA (bridge B1a) and protein L5 of the 50S subunit (bridge B1b), connecting the 2 subunits; these bridges are implicated in subunit movement. Contacts the tRNAs in the A and P-sites. This is Small ribosomal subunit protein uS13 from Leptospira borgpetersenii serovar Hardjo-bovis (strain L550).